The primary structure comprises 314 residues: ATP synthase gamma chain (314 aa).

This sequence belongs to the ATPase gamma chain family. In terms of assembly, F-type ATPases have 2 components, CF(1) - the catalytic core - and CF(0) - the membrane proton channel. CF(1) has five subunits: alpha(3), beta(3), gamma(1), delta(1), epsilon(1). CF(0) has three main subunits: a, b and c.

The protein localises to the cellular thylakoid membrane. Its function is as follows. Produces ATP from ADP in the presence of a proton gradient across the membrane. The gamma chain is believed to be important in regulating ATPase activity and the flow of protons through the CF(0) complex. The chain is ATP synthase gamma chain from Synechocystis sp. (strain ATCC 27184 / PCC 6803 / Kazusa).